The primary structure comprises 405 residues: Tryptophan synthase beta chain (405 aa).

The residue at position 98 (Lys-98) is an N6-(pyridoxal phosphate)lysine.

It belongs to the TrpB family. As to quaternary structure, tetramer of two alpha and two beta chains. Pyridoxal 5'-phosphate is required as a cofactor.

It catalyses the reaction (1S,2R)-1-C-(indol-3-yl)glycerol 3-phosphate + L-serine = D-glyceraldehyde 3-phosphate + L-tryptophan + H2O. The protein operates within amino-acid biosynthesis; L-tryptophan biosynthesis; L-tryptophan from chorismate: step 5/5. In terms of biological role, the beta subunit is responsible for the synthesis of L-tryptophan from indole and L-serine. The chain is Tryptophan synthase beta chain from Xanthomonas oryzae pv. oryzae (strain MAFF 311018).